Consider the following 506-residue polypeptide: Adenylosuccinate synthetase (506 aa).

GTP contacts are provided by residues 35–41 (GDEGKGK) and 63–65 (GHT). Aspartate 36 serves as the catalytic Proton acceptor. Mg(2+) contacts are provided by aspartate 36 and glycine 63. IMP contacts are provided by residues 36-39 (DEGK), 61-64 (NAGH), threonine 212, arginine 226, asparagine 304, threonine 319, and arginine 383. Histidine 64 serves as the catalytic Proton donor. Position 379 to 385 (379 to 385 (VTTKRKR)) interacts with substrate. GTP is bound by residues arginine 385, 411 to 413 (KLD), and 494 to 496 (GVG).

This sequence belongs to the adenylosuccinate synthetase family. Homodimer. Mg(2+) serves as cofactor.

It localises to the cytoplasm. It catalyses the reaction IMP + L-aspartate + GTP = N(6)-(1,2-dicarboxyethyl)-AMP + GDP + phosphate + 2 H(+). The protein operates within purine metabolism; AMP biosynthesis via de novo pathway; AMP from IMP: step 1/2. Plays an important role in the de novo pathway and in the salvage pathway of purine nucleotide biosynthesis. Catalyzes the first committed step in the biosynthesis of AMP from IMP. The protein is Adenylosuccinate synthetase of Drosophila yakuba (Fruit fly).